The sequence spans 367 residues: MTGKKLKEGFTTGACSAAAAKAATRLLLKGKPILEIETTLPNKRQVLFTVKRCQLEGEIATCSVVKDAGDDPDCTHGAELTARVRLTKENEIKLKGGDGVAVVTKAGLGLEIGQSAINPIPRKNIKEMILEELQGSSFNGAEVEISVPGGQEMAKKTMNERLGLIGGISILGTTGIVKPYSTAAFKASVIQAIQMAKEYGIDTIVLTTGGKSEKFAMDLLPNLNELSFIQVGDFIGTGIKTSVKESIRHTIIVGMIGKLSKMADGVMMTHRGGSSVNTTMLSTIARSIGVPEEIAIEIQNANTARHVLEICKVSGYKIITTKICEIVAEKCSKHAGTNIMISCYMVDFDGKLLGKCENFSPNVGLNL.

Belongs to the CbiD family.

It carries out the reaction Co-precorrin-5B + S-adenosyl-L-methionine = Co-precorrin-6A + S-adenosyl-L-homocysteine. The protein operates within cofactor biosynthesis; adenosylcobalamin biosynthesis; cob(II)yrinate a,c-diamide from sirohydrochlorin (anaerobic route): step 6/10. Its function is as follows. Catalyzes the methylation of C-1 in cobalt-precorrin-5B to form cobalt-precorrin-6A. The sequence is that of Cobalt-precorrin-5B C(1)-methyltransferase from Leptospira interrogans serogroup Icterohaemorrhagiae serovar Lai (strain 56601).